Here is a 113-residue protein sequence, read N- to C-terminus: MSESNRKSYTDFNVELLEKEKQKKKLKKPDRYKVILINDDYTPQEFVVYVLAVVFRKSMDESRQIMWRAHTEGSAVCGVYSLDIARTKVAEVHKLADDAGHPLQCQLAKEEEE.

The protein belongs to the ClpS family. As to quaternary structure, binds to the N-terminal domain of the chaperone ClpA.

In terms of biological role, involved in the modulation of the specificity of the ClpAP-mediated ATP-dependent protein degradation. This is ATP-dependent Clp protease adapter protein ClpS from Leptospira biflexa serovar Patoc (strain Patoc 1 / Ames).